Reading from the N-terminus, the 505-residue chain is RNA-splicing ligase RtcB homolog (505 aa).

Residues D119, C122, H227, and H259 each coordinate Mn(2+). 226 to 230 lines the GMP pocket; sequence NHYAE. Position 300 is a phosphoserine (S300). H353 serves as a coordination point for Mn(2+). GMP contacts are provided by residues 353-354, 402-405, S409, and 428-431; these read HN, GGTM, and HGAG. Residue H428 is the GMP-histidine intermediate of the active site. K496 participates in a covalent cross-link: Glycyl lysine isopeptide (Lys-Gly) (interchain with G-Cter in SUMO2). K504 contacts GMP.

Belongs to the RtcB family. Catalytic component of the tRNA-splicing ligase complex. The cofactor is Mn(2+).

The protein localises to the nucleus. The protein resides in the cytoplasm. The catalysed reaction is a 3'-end 3'-phospho-ribonucleotide-RNA + a 5'-end dephospho-ribonucleoside-RNA + GTP = a ribonucleotidyl-ribonucleotide-RNA + GMP + diphosphate. It catalyses the reaction a 3'-end 2',3'-cyclophospho-ribonucleotide-RNA + a 5'-end dephospho-ribonucleoside-RNA + GTP + H2O = a ribonucleotidyl-ribonucleotide-RNA + GMP + diphosphate + H(+). With respect to regulation, protein archease stimulates the activity of the tRNA ligase complex with high efficiency in the presence of GTP. Its function is as follows. Catalytic subunit of the tRNA-splicing ligase complex that acts by directly joining spliced tRNA halves to mature-sized tRNAs by incorporating the precursor-derived splice junction phosphate into the mature tRNA as a canonical 3',5'-phosphodiester. May act as an RNA ligase with broad substrate specificity, and may function toward other RNAs. The polypeptide is RNA-splicing ligase RtcB homolog (Homo sapiens (Human)).